We begin with the raw amino-acid sequence, 525 residues long: Peptide chain release factor 3 (525 aa).

A tr-type G domain is found at 11–279 (ERRRTFAIIS…AFVDMAPAPE (269 aa)). Residues 20 to 27 (SHPDAGKT), 88 to 92 (DTPGH), and 142 to 145 (NKLD) contribute to the GTP site.

Belongs to the TRAFAC class translation factor GTPase superfamily. Classic translation factor GTPase family. PrfC subfamily.

It is found in the cytoplasm. In terms of biological role, increases the formation of ribosomal termination complexes and stimulates activities of RF-1 and RF-2. It binds guanine nucleotides and has strong preference for UGA stop codons. It may interact directly with the ribosome. The stimulation of RF-1 and RF-2 is significantly reduced by GTP and GDP, but not by GMP. This is Peptide chain release factor 3 from Latilactobacillus sakei subsp. sakei (strain 23K) (Lactobacillus sakei subsp. sakei).